Reading from the N-terminus, the 449-residue chain is Glycoprotein endo-alpha-1,2-mannosidase (449 aa).

The Cytoplasmic portion of the chain corresponds to 1–8 (MIRFRRRT). The chain crosses the membrane as a helical; Signal-anchor for type II membrane protein span at residues 9-29 (CITLSIFIFLVCLIMAGLKHL). Residues 30–449 (RPENAAFGSP…YMKEKEHWLV (420 aa)) lie on the Lumenal side of the membrane. The tract at residues 59-449 (DSENHLKGNT…YMKEKEHWLV (391 aa)) is catalytic.

The protein belongs to the glycosyl hydrolase 99 family.

It is found in the golgi apparatus membrane. It carries out the reaction N-{alpha-Glc-(1-&gt;3)-alpha-Man-(1-&gt;2)-alpha-Man-(1-&gt;2)-alpha-Man-(1-&gt;3)-[alpha-Man-(1-&gt;2)-alpha-Man-(1-&gt;3)-[alpha-Man-(1-&gt;2)-alpha-Man-(1-&gt;6)]-alpha-Man-(1-&gt;6)]-beta-Man-(1-&gt;4)-beta-GlcNAc-(1-&gt;4)-beta-GlcNAc}-L-asparaginyl-[protein] + H2O = alpha-D-glucosyl-(1-&gt;3)-D-mannopyranose + N(4)-{alpha-D-Man-(1-&gt;2)-alpha-D-Man-(1-&gt;3)-[alpha-D-Man-(1-&gt;2)-alpha-D-Man-(1-&gt;3)-[alpha-D-Man-(1-&gt;2)-alpha-D-Man-(1-&gt;6)]-alpha-D-Man-(1-&gt;6)]-beta-D-Man-(1-&gt;4)-beta-D-GlaNAc-(1-&gt;4)-beta-D-GlcNAc}-L-asparaginyl-[protein] (N-glucan mannose isomer 8A1,2,3B1,2). This chain is Glycoprotein endo-alpha-1,2-mannosidase (manea), found in Xenopus laevis (African clawed frog).